The chain runs to 405 residues: L-rhamnonate dehydratase (405 aa).

2 residues coordinate substrate: His-33 and Arg-59. Residues Asp-226, Glu-252, and Glu-280 each contribute to the Mg(2+) site. The Proton acceptor role is filled by His-329. Glu-349 is a binding site for substrate.

This sequence belongs to the mandelate racemase/muconate lactonizing enzyme family. RhamD subfamily. Homooctamer; tetramer of dimers. It depends on Mg(2+) as a cofactor.

The catalysed reaction is L-rhamnonate = 2-dehydro-3-deoxy-L-rhamnonate + H2O. In terms of biological role, catalyzes the dehydration of L-rhamnonate to 2-keto-3-deoxy-L-rhamnonate (KDR). This chain is L-rhamnonate dehydratase, found in Salmonella typhi.